The chain runs to 598 residues: 2-succinyl-5-enolpyruvyl-6-hydroxy-3-cyclohexene-1-carboxylate synthase (598 aa).

Belongs to the TPP enzyme family. MenD subfamily. In terms of assembly, homodimer. Requires Mg(2+) as cofactor. The cofactor is Mn(2+). It depends on thiamine diphosphate as a cofactor.

It catalyses the reaction isochorismate + 2-oxoglutarate + H(+) = 5-enolpyruvoyl-6-hydroxy-2-succinyl-cyclohex-3-ene-1-carboxylate + CO2. Its pathway is quinol/quinone metabolism; 1,4-dihydroxy-2-naphthoate biosynthesis; 1,4-dihydroxy-2-naphthoate from chorismate: step 2/7. The protein operates within cofactor biosynthesis; phylloquinone biosynthesis. Functionally, catalyzes the thiamine diphosphate-dependent decarboxylation of 2-oxoglutarate and the subsequent addition of the resulting succinic semialdehyde-thiamine pyrophosphate anion to isochorismate to yield 2-succinyl-5-enolpyruvyl-6-hydroxy-3-cyclohexene-1-carboxylate (SEPHCHC). The sequence is that of 2-succinyl-5-enolpyruvyl-6-hydroxy-3-cyclohexene-1-carboxylate synthase from Prochlorococcus marinus (strain NATL2A).